The sequence spans 644 residues: MSSDAAAVADRDGSSPGHGGHAHGSLGAMVVGAVGVVFGDIGTSPLYAFRETFAGHHPLPPDELHILGVLSLIFWSMMLVVTFKYVAIIMRADNKGEGGSLALLALINRKSEGKRWGKGIILLGVFATALFYGDSMITPAISVLSAVEGLTTVEAGFAPMVLPIAVGILIALFMIQSRGTAKVGMLFGPIMMIYFTTLGVLGTWHIIGNPHVLIALNPWYAVRFFMEEGTLAFLAMGSVVLAVTGAEALYADMGHFGRRPIGLSWLVFVLPALMLNYLGQGAMILSQDMATALRTIHNPFFLLAPEMLRLPLVILATMATVIASQAVITGAFSVTQQAIQLGFIPRLRITHTSAGSIGQIYIPAINWGLMVMVILLVMSFRTSSNLAAAYGIAVTGAMAIDTCLIAVVLIHLWGWNKALAAPLIAVFAAVDIAYFGANLTKVPDGGWFPLLIGFIAFTLLTTWGRGRMLMINRLREAAMPVKVFVQSAVNSAVRVPGTAVFMTSQAQGVPHALLHNLKHNKVLHERVILLTVKIADAPYVPESHRVDFADLGQGFYRIVINYGFMEDPDVPAVLSRTRTCGPEFKMMDTSFFLARQTLLPSERPAMAIWREKLFAWMLRNAESAMEFFKLPTNRVVELGSQVEI.

The disordered stretch occupies residues 1-21; sequence MSSDAAAVADRDGSSPGHGGH. 12 consecutive transmembrane segments (helical) span residues 26 to 46, 69 to 89, 120 to 140, 155 to 175, 183 to 203, 231 to 251, 265 to 285, 312 to 332, 360 to 380, 390 to 410, 419 to 439, and 444 to 464; these read LGAMVVGAVGVVFGDIGTSPL, VLSLIFWSMMLVVTFKYVAII, IILLGVFATALFYGDSMITPA, AGFAPMVLPIAVGILIALFMI, VGMLFGPIMMIYFTTLGVLGT, LAFLAMGSVVLAVTGAEALYA, WLVFVLPALMLNYLGQGAMIL, LVILATMATVIASQAVITGAF, IYIPAINWGLMVMVILLVMSF, YGIAVTGAMAIDTCLIAVVLI, LAAPLIAVFAAVDIAYFGANL, and DGGWFPLLIGFIAFTLLTTWG.

The protein belongs to the HAK/KUP transporter (TC 2.A.72) family.

It is found in the cell inner membrane. The enzyme catalyses K(+)(in) + H(+)(in) = K(+)(out) + H(+)(out). Transport of potassium into the cell. Likely operates as a K(+):H(+) symporter. This is Probable potassium transport system protein Kup 2 from Rhizorhabdus wittichii (strain DSM 6014 / CCUG 31198 / JCM 15750 / NBRC 105917 / EY 4224 / RW1) (Sphingomonas wittichii).